The chain runs to 968 residues: RNA polymerase-associated protein RapA (968 aa).

A Helicase ATP-binding domain is found at 163 to 332; that stretch reads EVGRRYAPRV…FARLRLLDPD (170 aa). 176-183 provides a ligand contact to ATP; the sequence is DEVGLGKT. Positions 278-281 match the DEAH box motif; that stretch reads DEAH. A Helicase C-terminal domain is found at 491-641; it reads RVDWLIAFLK…AFELTCPSGH (151 aa).

The protein belongs to the SNF2/RAD54 helicase family. RapA subfamily. Interacts with the RNAP. Has a higher affinity for the core RNAP than for the holoenzyme. Its ATPase activity is stimulated by binding to RNAP.

Transcription regulator that activates transcription by stimulating RNA polymerase (RNAP) recycling in case of stress conditions such as supercoiled DNA or high salt concentrations. Probably acts by releasing the RNAP, when it is trapped or immobilized on tightly supercoiled DNA. Does not activate transcription on linear DNA. Probably not involved in DNA repair. This Shewanella denitrificans (strain OS217 / ATCC BAA-1090 / DSM 15013) protein is RNA polymerase-associated protein RapA.